The chain runs to 130 residues: Early 3 receptor internalization and degradation beta protein (130 aa).

Positions 1–19 (MKRSVIFVLLIFCALPVLC) are cleaved as a signal peptide. A helical transmembrane segment spans residues 53-77 (AWLYAIISVMVFCSTIFALAIYPYL). Positions 122 to 125 (YFNL) are tyrosine-based sorting motif.

It belongs to the adenoviridae E3_RID-beta family. Interacts with E3 RID-alpha and E3 CR1-alpha. In terms of processing, phosphorylated on serine. O-glycosylated, but not N-glycosylated.

The protein resides in the host membrane. Prevents infected cell apoptosis induced by the host immune system. Acts by down-regulating a number of cell surface receptors in the tumor necrosis factor (TNF) receptor superfamily, namely FAS, TNFRSF10A/TRAIL receptor 1, and TNFRSF10B/TRAIL receptor 2. Down-regulation of these death receptors protects adenovirus-infected cells from apoptosis induced by the death receptor ligands Fas ligand and TRAIL. RID complex also down-regulates certain tyrosine kinase cell surface receptors, especially the epidermal growth factor receptor (EGFR). RID-mediated Fas and EGFR down-regulation occurs via endocytosis of the receptors into endosomes followed by transport to and degradation within lysosomes. In Human adenovirus C serotype 2 (HAdV-2), this protein is Early 3 receptor internalization and degradation beta protein.